The chain runs to 1011 residues: DNA-directed RNA polymerase subunit beta'' (1011 aa).

Residues Cys-216, Cys-282, Cys-288, and Cys-291 each coordinate Zn(2+).

This sequence belongs to the RNA polymerase beta' chain family. RpoC2 subfamily. In terms of assembly, in plastids the minimal PEP RNA polymerase catalytic core is composed of four subunits: alpha, beta, beta', and beta''. When a (nuclear-encoded) sigma factor is associated with the core the holoenzyme is formed, which can initiate transcription. Zn(2+) is required as a cofactor.

The protein localises to the plastid. The protein resides in the chloroplast. The catalysed reaction is RNA(n) + a ribonucleoside 5'-triphosphate = RNA(n+1) + diphosphate. In terms of biological role, DNA-dependent RNA polymerase catalyzes the transcription of DNA into RNA using the four ribonucleoside triphosphates as substrates. This is DNA-directed RNA polymerase subunit beta'' from Ostreococcus tauri.